The sequence spans 100 residues: Replication restart protein PriB (100 aa).

The 99-residue stretch at Met-1–Lys-99 folds into the SSB domain.

Belongs to the PriB family. As to quaternary structure, homodimer. Interacts with PriA and DnaT. Component of the replication restart primosome. Primosome assembly occurs via a 'hand-off' mechanism. PriA binds to replication forks, subsequently PriB then DnaT bind; DnaT then displaces ssDNA to generate the helicase loading substrate.

In terms of biological role, involved in the restart of stalled replication forks, which reloads the replicative helicase on sites other than the origin of replication; the PriA-PriB pathway is the major replication restart pathway. During primosome assembly it facilitates complex formation between PriA and DnaT on DNA; stabilizes PriA on DNA. Stimulates the DNA unwinding activity of PriA helicase. The chain is Replication restart protein PriB from Neisseria meningitidis serogroup C (strain 053442).